The following is a 287-amino-acid chain: Phosphatidylserine decarboxylase proenzyme (287 aa).

Residues aspartate 89, histidine 146, and serine 252 each act as charge relay system; for autoendoproteolytic cleavage activity in the active site. Serine 252 acts as the Schiff-base intermediate with substrate; via pyruvic acid; for decarboxylase activity in catalysis. Position 252 is a pyruvic acid (Ser); by autocatalysis (serine 252).

The protein belongs to the phosphatidylserine decarboxylase family. PSD-B subfamily. Prokaryotic type I sub-subfamily. Heterodimer of a large membrane-associated beta subunit and a small pyruvoyl-containing alpha subunit. Pyruvate serves as cofactor. In terms of processing, is synthesized initially as an inactive proenzyme. Formation of the active enzyme involves a self-maturation process in which the active site pyruvoyl group is generated from an internal serine residue via an autocatalytic post-translational modification. Two non-identical subunits are generated from the proenzyme in this reaction, and the pyruvate is formed at the N-terminus of the alpha chain, which is derived from the carboxyl end of the proenzyme. The autoendoproteolytic cleavage occurs by a canonical serine protease mechanism, in which the side chain hydroxyl group of the serine supplies its oxygen atom to form the C-terminus of the beta chain, while the remainder of the serine residue undergoes an oxidative deamination to produce ammonia and the pyruvoyl prosthetic group on the alpha chain. During this reaction, the Ser that is part of the protease active site of the proenzyme becomes the pyruvoyl prosthetic group, which constitutes an essential element of the active site of the mature decarboxylase.

It is found in the cell membrane. It carries out the reaction a 1,2-diacyl-sn-glycero-3-phospho-L-serine + H(+) = a 1,2-diacyl-sn-glycero-3-phosphoethanolamine + CO2. It functions in the pathway phospholipid metabolism; phosphatidylethanolamine biosynthesis; phosphatidylethanolamine from CDP-diacylglycerol: step 2/2. Its function is as follows. Catalyzes the formation of phosphatidylethanolamine (PtdEtn) from phosphatidylserine (PtdSer). The sequence is that of Phosphatidylserine decarboxylase proenzyme from Shewanella amazonensis (strain ATCC BAA-1098 / SB2B).